Consider the following 380-residue polypeptide: Gap junction gamma-1 protein (380 aa).

The Cytoplasmic segment spans residues 1–22; that stretch reads MSWSFLTRLLDEISNHSTFVGK. A helical transmembrane segment spans residues 23–45; it reads IWLTLFIIFRIVLTVVGGESIYY. The Extracellular segment spans residues 46–75; sequence DEQSKFVCNTQQPGCENVCYDAFAPLSHVR. Residues 76-95 form a helical membrane-spanning segment; sequence FWVFQIILITTPTIMYLGFA. Topologically, residues 96 to 171 are cytoplasmic; sequence MHKIARSNDV…RRIKRDGLMK (76 aa). The helical transmembrane segment at 172 to 194 threads the bilayer; sequence VYILQLLSRIIFEVGFLFGQYIL. Residues 195–228 are Extracellular-facing; sequence YGFEVAPSYVCTRSPCPHTVDCFVSRPTEKTIFL. Residues 229–251 form a helical membrane-spanning segment; sequence LIMYAVSCLCLSLTVLEILHLGL. At 252–380 the chain is on the cytoplasmic side; it reads SGIRDAFRRR…GSKCEKGIHA (129 aa). Residues 337–380 are disordered; it reads AYQNGESSPSRSSSPESNGTAVEQNRLNFAQEKQGSKCEKGIHA. Residues 342-353 show a composition bias toward low complexity; it reads ESSPSRSSSPES. Residues 354 to 369 show a composition bias toward polar residues; the sequence is NGTAVEQNRLNFAQEK. Residues 370-380 show a composition bias toward basic and acidic residues; sequence QGSKCEKGIHA.

The protein belongs to the connexin family. Gamma-type subfamily. A connexon is composed of a hexamer of connexins.

The protein resides in the cell membrane. It is found in the cell junction. It localises to the gap junction. In terms of biological role, one gap junction consists of a cluster of closely packed pairs of transmembrane channels, the connexons, through which materials of low MW diffuse from one cell to a neighboring cell. Participates in a developmental pathway for formation of the notochord and tail. This is Gap junction gamma-1 protein (gjc1) from Danio rerio (Zebrafish).